A 567-amino-acid chain; its full sequence is Vacuolar fusion protein MON1 homolog (567 aa).

Disordered stretches follow at residues 1-52 (MDMD…DDEG) and 65-129 (TSAS…DDTS). Pro residues predominate over residues 7–19 (TNNPSPPGPPDSP). Residues 43-52 (DDYDDDDDEG) show a composition bias toward acidic residues.

Belongs to the MON1/SAND family. Interacts with CCZ1A, CCZ1B and RABF2B.

The protein localises to the endosome. The protein resides in the prevacuolar compartment. Its function is as follows. Plays an important role in membrane trafficking through the secretory apparatus. In complex with CCZ1, acts as a guanine exchange factor (GEF) for Rab7 protein family. Promotes the exchange of GDP to GTP, converting it from an inactive GDP-bound form into an active GTP-bound form. The active form is involved in protein trafficking from prevacuolar compartments (PVCs) to vacuoles. May serve as a linker between Rab5 and Rab7 protein families in PVCs and mediate PVC maturation. In Oryza sativa subsp. japonica (Rice), this protein is Vacuolar fusion protein MON1 homolog.